The following is a 347-amino-acid chain: Methionine import ATP-binding protein MetN (347 aa).

The ABC transporter domain maps to 2–241 (IKLEGVSKTY…PATRLGRDFL (240 aa)). 38–45 (GLSGAGKS) contributes to the ATP binding site.

The protein belongs to the ABC transporter superfamily. Methionine importer (TC 3.A.1.24) family. The complex is composed of two ATP-binding proteins (MetN), two transmembrane proteins (MetI) and a solute-binding protein (MetQ).

The protein localises to the cell inner membrane. The catalysed reaction is L-methionine(out) + ATP + H2O = L-methionine(in) + ADP + phosphate + H(+). It carries out the reaction D-methionine(out) + ATP + H2O = D-methionine(in) + ADP + phosphate + H(+). Part of the ABC transporter complex MetNIQ involved in methionine import. Responsible for energy coupling to the transport system. This is Methionine import ATP-binding protein MetN from Chromohalobacter salexigens (strain ATCC BAA-138 / DSM 3043 / CIP 106854 / NCIMB 13768 / 1H11).